Consider the following 446-residue polypeptide: Probable D-serine dehydratase (446 aa).

Residue Lys116 is modified to N6-(pyridoxal phosphate)lysine.

Belongs to the serine/threonine dehydratase family. DsdA subfamily. Pyridoxal 5'-phosphate is required as a cofactor.

The catalysed reaction is D-serine = pyruvate + NH4(+). The sequence is that of Probable D-serine dehydratase from Bacillus cereus (strain ZK / E33L).